Reading from the N-terminus, the 379-residue chain is NADH-quinone oxidoreductase subunit D 1 (379 aa).

It belongs to the complex I 49 kDa subunit family. In terms of assembly, NDH-1 is composed of 14 different subunits. Subunits NuoB, C, D, E, F, and G constitute the peripheral sector of the complex.

It localises to the cell inner membrane. It catalyses the reaction a quinone + NADH + 5 H(+)(in) = a quinol + NAD(+) + 4 H(+)(out). Functionally, NDH-1 shuttles electrons from NADH, via FMN and iron-sulfur (Fe-S) centers, to quinones in the respiratory chain. The immediate electron acceptor for the enzyme in this species is believed to be ubiquinone. Couples the redox reaction to proton translocation (for every two electrons transferred, four hydrogen ions are translocated across the cytoplasmic membrane), and thus conserves the redox energy in a proton gradient. This Anaeromyxobacter sp. (strain K) protein is NADH-quinone oxidoreductase subunit D 1.